Consider the following 189-residue polypeptide: Large ribosomal subunit protein uL6 (189 aa).

The protein belongs to the universal ribosomal protein uL6 family. In terms of assembly, part of the 50S ribosomal subunit.

Functionally, this protein binds to the 23S rRNA, and is important in its secondary structure. It is located near the subunit interface in the base of the L7/L12 stalk, and near the tRNA binding site of the peptidyltransferase center. The protein is Large ribosomal subunit protein uL6 of Bacteroides fragilis (strain ATCC 25285 / DSM 2151 / CCUG 4856 / JCM 11019 / LMG 10263 / NCTC 9343 / Onslow / VPI 2553 / EN-2).